Here is a 364-residue protein sequence, read N- to C-terminus: F-box protein At1g59680 (364 aa).

An F-box domain is found at 2 to 49; sequence TTMSDLSVDLVGEILSRVPLTSLSAVRCTCKSWNTLSKHQIFGKAELA.

The polypeptide is F-box protein At1g59680 (Arabidopsis thaliana (Mouse-ear cress)).